The chain runs to 738 residues: 1,4-alpha-glucan branching enzyme GlgB (738 aa).

Catalysis depends on D417, which acts as the Nucleophile. Catalysis depends on E472, which acts as the Proton donor.

Belongs to the glycosyl hydrolase 13 family. GlgB subfamily. In terms of assembly, monomer.

The enzyme catalyses Transfers a segment of a (1-&gt;4)-alpha-D-glucan chain to a primary hydroxy group in a similar glucan chain.. The protein operates within glycan biosynthesis; glycogen biosynthesis. Catalyzes the formation of the alpha-1,6-glucosidic linkages in glycogen by scission of a 1,4-alpha-linked oligosaccharide from growing alpha-1,4-glucan chains and the subsequent attachment of the oligosaccharide to the alpha-1,6 position. The sequence is that of 1,4-alpha-glucan branching enzyme GlgB from Burkholderia pseudomallei (strain K96243).